Here is an 85-residue protein sequence, read N- to C-terminus: Neurtoxin 10 (85 aa).

A signal peptide spans 1–23 (MKFCVAVSLLIIASMAGVISVSG). In terms of domain architecture, LCN-type CS-alpha/beta spans 24-85 (YDVYPRDYAE…NFLSVIWKHC (62 aa)). Cystine bridges form between Cys38–Cys60, Cys46–Cys65, and Cys50–Cys67.

The protein belongs to the long (3 C-C) scorpion toxin superfamily. Expressed by the venom gland.

It localises to the secreted. This is Neurtoxin 10 from Lychas mucronatus (Chinese swimming scorpion).